Consider the following 506-residue polypeptide: Glycerol kinase (506 aa).

Residue T11 coordinates ADP. ATP contacts are provided by T11, S12, and S13. T11 is a sn-glycerol 3-phosphate binding site. Residue R15 coordinates ADP. Sn-glycerol 3-phosphate contacts are provided by R81, E82, Y133, and D242. The glycerol site is built by R81, E82, Y133, D242, and Q243. 2 residues coordinate ADP: T264 and G316. 4 residues coordinate ATP: T264, G316, Q320, and G421. G421 and N425 together coordinate ADP.

It belongs to the FGGY kinase family.

It carries out the reaction glycerol + ATP = sn-glycerol 3-phosphate + ADP + H(+). It participates in polyol metabolism; glycerol degradation via glycerol kinase pathway; sn-glycerol 3-phosphate from glycerol: step 1/1. With respect to regulation, inhibited by fructose 1,6-bisphosphate (FBP). Functionally, key enzyme in the regulation of glycerol uptake and metabolism. Catalyzes the phosphorylation of glycerol to yield sn-glycerol 3-phosphate. In Paracidovorax citrulli (strain AAC00-1) (Acidovorax citrulli), this protein is Glycerol kinase.